We begin with the raw amino-acid sequence, 219 residues long: Epididymal secretory glutathione peroxidase (219 aa).

The first 21 residues, 1–21, serve as a signal peptide directing secretion; the sequence is MTVQLGAFYLFPLFMAGFVQT. The active site involves Cys-71.

This sequence belongs to the glutathione peroxidase family. In terms of assembly, homotetramer. Proximal caput epididymis.

It localises to the secreted. It carries out the reaction 2 glutathione + H2O2 = glutathione disulfide + 2 H2O. In terms of biological role, may constitute a glutathione peroxidase-like protective system against peroxide damage in sperm membrane lipids. Since the purified porcine enzyme has very little activity towards hydrogen peroxide or organic hydroperoxides the protective effect is not likely to be exerted by its enzymatic activity. Instead, may protect sperm from premature acrosome reaction in the epididymis by binding to lipid peroxides, which might otherwise interact with phospholipase A2 and induce the acrosome reaction. The protein is Epididymal secretory glutathione peroxidase (GPX5) of Sus scrofa (Pig).